The chain runs to 370 residues: Protein RecA (370 aa).

The segment at 1–20 is disordered; it reads MSFEERRKKDSKESSSKEKD. 78–85 is an ATP binding site; it reads GPESSGKT.

It belongs to the RecA family.

It is found in the cytoplasm. In terms of biological role, can catalyze the hydrolysis of ATP in the presence of single-stranded DNA, the ATP-dependent uptake of single-stranded DNA by duplex DNA, and the ATP-dependent hybridization of homologous single-stranded DNAs. It interacts with LexA causing its activation and leading to its autocatalytic cleavage. This Prochlorococcus marinus (strain MIT 9515) protein is Protein RecA.